The sequence spans 495 residues: Geraniol 8-hydroxylase (495 aa).

The chain crosses the membrane as a helical span at residues 5–25 (FLTIAIGFLFTITLYQALNFF). Cys-438 is a binding site for heme.

Belongs to the cytochrome P450 family. The cofactor is heme. As to expression, expressed in leaves, stems and roots.

It is found in the endoplasmic reticulum membrane. It carries out the reaction (2E)-geraniol + reduced [NADPH--hemoprotein reductase] + O2 = (6E)-8-hydroxygeraniol + oxidized [NADPH--hemoprotein reductase] + H2O + H(+). Hydroxylase involved in the biosynthesis of hydroxygeraniol, a precursor of the iridoid monoterpenoid swertiamarin. The protein is Geraniol 8-hydroxylase (CYP76B10) of Swertia mussotii (Felwort).